The following is a 971-amino-acid chain: MTEKTSSLVFSAQYVALVHTICSFAAFFIPLALALYTHYYQVVKNEFYGYPEEWFPSVSATIGDWYPERSVFQWLIALTATPRLLVLLLWFTLSGISRPSVIITTALGVLRTALCGGWVYVTSTDDHDWHDIFMIGYLISNAPWFILVSKCSPVNSMASRIRNIGSALFVLTIFPLIYWYIQHKFKHIPGAYTVYAFFEWSLILWDILFDSALYWDFKPLVFNLHTSKTYSNPSSFATRKKEKGEHLSYAEAAAVGTQAKNIKKDSNVKCSKKQILFSLLYFSSEVYLSFVFWSVLTSLGLLVWYFPLWHMGISGYEACILFELSPFLLGIPLLRKFASKVPVIFLFLNVIGIAAYKLEDPVHRLFVTAFSVCCECLAWTSLFSNISPENLAIERKISTFLFGLLASSIAKYSFFSNNPIWPILNETNGGKQIPALIVGIIACLIFAIFHVQQTTANAVEHFKLRKITALSAALSLGTVLFCLHTFLCDSTVLMTWSWDGYPIKGPQPYPHGAVSIVVSICAVLVAPYLYQSGAFMLIGFVLACFGSYFMYINHGWCSYLGGLIFTSYVLIYSFASIRISSFYSPAKVWGGAFLVYILYSLAHVWVVAYEFVPGGPILRERTSYILIFIGWNLAALVPAYSGESKEPNKADSSVVDIKQSDSSYRRRSFKKSLLTGFCLALMALKFAIQNMPPYDYTPYHPNEKLFTAGIWTIHFGLDNFMYASENRIRDAVRDMELDVFGLLESDTQRLIMGFRDLTQVLAHDLGMYADYGPGPDKHTWGAALLSKFPIVNSTHHLLPSPQGELAPAIHATLDVYGELIDVVVSHNGQYESQLDRRLQSTELARIMRESPRPLVFLGYVVSNVGQEPQTILTRDTGMLDIEPADYDRWCQYIFYRGVKRIGYARLHRSTITDTELQTGKFLVTKDLGRNVRIDKEHVPESHRYPSLFEGTGVNGHYYDNNLVVHEPWYYD.

Positions 1-242 (MTEKTSSLVF…PSSFATRKKE (242 aa)) are PGAP2-like. A run of 19 helical transmembrane segments spans residues 15-35 (VALV…ALAL), 71-91 (VFQW…LLWF), 101-121 (VIIT…WVYV), 129-149 (WHDI…ILVS), 161-181 (IRNI…YWYI), 188-208 (IPGA…WDIL), 286-306 (VYLS…VWYF), 313-333 (ISGY…GIPL), 336-356 (KFAS…IAAY), 366-386 (FVTA…FSNI), 397-417 (ISTF…FFSN), 432-452 (QIPA…FHVQ), 467-487 (ITAL…HTFL), 509-529 (YPHG…APYL), 532-552 (SGAF…FMYI), 555-575 (GWCS…YSFA), 588-608 (VWGG…WVVA), 622-642 (TSYI…AYSG), and 673-693 (LLTG…NMPP). Positions 243 to 971 (KGEHLSYAEA…LVVHEPWYYD (729 aa)) are PGAP2IP-like. Residue histidine 826 is part of the active site.

In the N-terminal section; belongs to the PGAP2 family. This sequence in the C-terminal section; belongs to the PGAP2IP family.

The protein localises to the cell membrane. It localises to the endoplasmic reticulum membrane. Its function is as follows. Involved in the maintenance of cell wall integrity. Required for the replacement of the diacylglycerol moiety by ceramides during GPI-anchor maturation. In Schizosaccharomyces pombe (strain 972 / ATCC 24843) (Fission yeast), this protein is Protein cwh43 (cwh43).